The following is a 491-amino-acid chain: Delayed-rectifier potassium channel regulatory subunit KCNS3 (491 aa).

At 1–182 (MVFGEFFHRP…IRMENPAYCL (182 aa)) the chain is on the cytoplasmic side. A helical membrane pass occupies residues 183–204 (SAKLIAISSLSVVLASIVAMCV). Residues 205–220 (HSMSEFQNEDGEVDDP) lie on the Extracellular side of the membrane. The helical transmembrane segment at 221 to 243 (VLEGVEIACIAWFTGELAIRLVA) threads the bilayer. The Cytoplasmic segment spans residues 244-254 (APSQKKFWKNP). Residues 255–275 (LNIIDFVSIIPFYATLAVDTK) traverse the membrane as a helical segment. At 276–285 (EEESEDIENM) the chain is on the extracellular side. Residues 286 to 306 (GKVVQILRLMRIFRILKLARH) form a helical; Voltage-sensor membrane-spanning segment. Residues 307–321 (SVGLRSLGATLRHSY) are Cytoplasmic-facing. The helical transmembrane segment at 322–343 (HEVGLLLLFLSVGISIFSVLIY) threads the bilayer. Topologically, residues 344–357 (SVEKDEHKSSLTSI) are extracellular. The helical intramembrane region spans 358-369 (PICWWWATISMT). The Selectivity filter motif lies at 370 to 375 (TVGYGD). An intramembrane segment occupies 370–377 (TVGYGDTH). Over 378 to 384 (PVTLAGK) the chain is Extracellular. A helical membrane pass occupies residues 385-413 (IIASTCIICGILVVALPITIIFNKFSKYY). Topologically, residues 414 to 491 (QKQKDMEVDQ…TASLENCTGK (78 aa)) are cytoplasmic.

The protein belongs to the potassium channel family. S (TC 1.A.1.2) subfamily. Kv9.3/KCNS3 sub-subfamily. Heterotetramer with KCNB1. Does not form homomultimers.

It is found in the cell membrane. Its function is as follows. Potassium channel regulatory subunit that modulates the delayed rectifier potassium channel activity of KCNB1 by namely slowing down the deactivation and inactivation time constants. While it does not form functional channel on its own, it can form functional heterotetrameric channels with KCNB1. The polypeptide is Delayed-rectifier potassium channel regulatory subunit KCNS3 (Mus musculus (Mouse)).